Here is a 64-residue protein sequence, read N- to C-terminus: MAKKDQLTLRGPLYGNNRSHSKTITRRKWNVNLQSCKIKDTNGKVTRILVSTKTIRTLKKQNRF.

The segment at Met-1–Ser-21 is disordered.

It belongs to the bacterial ribosomal protein bL28 family.

The protein is Large ribosomal subunit protein bL28 of Mycoplasma genitalium (strain ATCC 33530 / DSM 19775 / NCTC 10195 / G37) (Mycoplasmoides genitalium).